The chain runs to 464 residues: tRNA modification GTPase MnmE (464 aa).

Residues Arg29, Glu91, and Arg131 each contribute to the (6S)-5-formyl-5,6,7,8-tetrahydrofolate site. One can recognise a TrmE-type G domain in the interval 226 to 387; that stretch reads GLKVALAGKP…LINYLLKKCG (162 aa). Residue Asn236 participates in K(+) binding. Residues 236–241, 255–261, and 280–283 contribute to the GTP site; these read NVGKSS, TDLPGTT, and DTAG. Ser240 provides a ligand contact to Mg(2+). K(+) is bound by residues Thr255, Leu257, and Thr260. Residue Thr261 coordinates Mg(2+). Lys464 contributes to the (6S)-5-formyl-5,6,7,8-tetrahydrofolate binding site.

It belongs to the TRAFAC class TrmE-Era-EngA-EngB-Septin-like GTPase superfamily. TrmE GTPase family. Homodimer. Heterotetramer of two MnmE and two MnmG subunits. Requires K(+) as cofactor.

The protein resides in the cytoplasm. Exhibits a very high intrinsic GTPase hydrolysis rate. Involved in the addition of a carboxymethylaminomethyl (cmnm) group at the wobble position (U34) of certain tRNAs, forming tRNA-cmnm(5)s(2)U34. This is tRNA modification GTPase MnmE from Prochlorococcus marinus (strain NATL1A).